Reading from the N-terminus, the 212-residue chain is Adenine phosphoribosyltransferase (212 aa).

This sequence belongs to the purine/pyrimidine phosphoribosyltransferase family. In terms of assembly, homodimer.

It is found in the cytoplasm. It carries out the reaction AMP + diphosphate = 5-phospho-alpha-D-ribose 1-diphosphate + adenine. It participates in purine metabolism; AMP biosynthesis via salvage pathway; AMP from adenine: step 1/1. Functionally, catalyzes a salvage reaction resulting in the formation of AMP, that is energically less costly than de novo synthesis. The polypeptide is Adenine phosphoribosyltransferase (Mycobacterium tuberculosis (strain ATCC 25618 / H37Rv)).